Consider the following 99-residue polypeptide: Aspartyl/glutamyl-tRNA(Asn/Gln) amidotransferase subunit C (99 aa).

Belongs to the GatC family. In terms of assembly, heterotrimer of A, B and C subunits.

The catalysed reaction is L-glutamyl-tRNA(Gln) + L-glutamine + ATP + H2O = L-glutaminyl-tRNA(Gln) + L-glutamate + ADP + phosphate + H(+). It carries out the reaction L-aspartyl-tRNA(Asn) + L-glutamine + ATP + H2O = L-asparaginyl-tRNA(Asn) + L-glutamate + ADP + phosphate + 2 H(+). In terms of biological role, allows the formation of correctly charged Asn-tRNA(Asn) or Gln-tRNA(Gln) through the transamidation of misacylated Asp-tRNA(Asn) or Glu-tRNA(Gln) in organisms which lack either or both of asparaginyl-tRNA or glutaminyl-tRNA synthetases. The reaction takes place in the presence of glutamine and ATP through an activated phospho-Asp-tRNA(Asn) or phospho-Glu-tRNA(Gln). This chain is Aspartyl/glutamyl-tRNA(Asn/Gln) amidotransferase subunit C, found in Variovorax paradoxus (strain S110).